The following is an 84-amino-acid chain: Small ribosomal subunit protein uS17 (84 aa).

It belongs to the universal ribosomal protein uS17 family. Part of the 30S ribosomal subunit.

One of the primary rRNA binding proteins, it binds specifically to the 5'-end of 16S ribosomal RNA. This Vibrio vulnificus (strain CMCP6) protein is Small ribosomal subunit protein uS17.